The chain runs to 860 residues: DNA mismatch repair protein MutS (860 aa).

606–613 is a binding site for ATP; sequence GPNMSGKS.

Belongs to the DNA mismatch repair MutS family.

In terms of biological role, this protein is involved in the repair of mismatches in DNA. It is possible that it carries out the mismatch recognition step. This protein has a weak ATPase activity. The protein is DNA mismatch repair protein MutS of Geobacillus sp. (strain WCH70).